The sequence spans 119 residues: Protein TusC (119 aa).

The protein belongs to the DsrF/TusC family. Heterohexamer, formed by a dimer of trimers. The hexameric TusBCD complex contains 2 copies each of TusB, TusC and TusD. The TusBCD complex interacts with TusE.

The protein localises to the cytoplasm. Functionally, part of a sulfur-relay system required for 2-thiolation of 5-methylaminomethyl-2-thiouridine (mnm(5)s(2)U) at tRNA wobble positions. This chain is Protein TusC, found in Buchnera aphidicola subsp. Baizongia pistaciae (strain Bp).